Reading from the N-terminus, the 310-residue chain is Glutaminase 1 (310 aa).

Positions 66, 117, 161, 168, 192, 244, and 262 each coordinate substrate. Lys294 is subject to N6-acetyllysine.

The protein belongs to the glutaminase family. In terms of assembly, homotetramer.

It carries out the reaction L-glutamine + H2O = L-glutamate + NH4(+). The sequence is that of Glutaminase 1 from Escherichia coli (strain K12).